We begin with the raw amino-acid sequence, 716 residues long: Calpain-1 catalytic subunit (716 aa).

Residues 55-354 form the Calpain catalytic domain; sequence LFRDEAFPPV…FTRLEICNLT (300 aa). 2 residues coordinate Ca(2+): Q109 and D114. Residues C115, H272, and N296 contribute to the active site. Positions 318 and 323 each coordinate Ca(2+). Phosphothreonine is present on T354. Residues 355–528 are domain III; it reads PDALKSQRFR…KSAGTQELDD (174 aa). The tract at residues 529-544 is linker; it reads QVQANLPDEQVLSEEE. 4 EF-hand domains span residues 543–578, 587–620, 617–652, and 682–716; these read EEID…IISK, FSLE…NRIR, NRIR…AGFK, and VRLE…TMFA. Residues 545–715 are domain IV; the sequence is IDENFKSLFR…LFKWLQLTMF (171 aa). The Ca(2+) site is built by D600, D602, N604, K606, E611, D630, D632, S634, S636, and E641.

This sequence belongs to the peptidase C2 family. Forms a heterodimer with a small (regulatory) subunit CAPNS1. The cofactor is Ca(2+). Undergoes calcium-induced successive autoproteolytic cleavages that generate a membrane-bound 78 kDa active form and an intracellular 75 kDa active form. Calpastatin reduces with high efficiency the transition from 78 kDa to 75 kDa calpain forms.

Its subcellular location is the cytoplasm. The protein resides in the cell membrane. It catalyses the reaction Broad endopeptidase specificity.. Its activity is regulated as follows. Activated by micromolar concentrations of calcium and inhibited by calpastatin. Its function is as follows. Calcium-regulated non-lysosomal thiol-protease which catalyzes limited proteolysis of substrates involved in cytoskeletal remodeling and signal transduction. Proteolytically cleaves CTBP1. Cleaves and activates caspase-7 (CASP7). The polypeptide is Calpain-1 catalytic subunit (Bos taurus (Bovine)).